The primary structure comprises 618 residues: ADP,ATP carrier protein 2, chloroplastic (618 aa).

Residues 1–76 constitute a chloroplast transit peptide; sequence MEGLIQTRGI…KERSRGFICK (76 aa). At Ala77 the chain carries N-acetylalanine. The next 11 helical transmembrane spans lie at 110–130, 148–168, 179–199, 237–257, 270–289, 312–332, 368–388, 401–421, 441–461, 464–484, and 542–562; these read LKKIVPLGLMFFCILFNYTIL, IIPFLKTWVNLPMAIGFMLLY, ALFYTVIVPFIVYFGAFGFVM, LFYVMAELWGSVVVSVLFWGF, FYPLFGLGANVALIFSGRTV, AMMSIVVGMGLAICFLYWWVN, LATLVVAYGISINLVEVTWKS, SAFMGDFSTCTGIATFTMMLL, VLLLTGVAFFSLILFGGPFAP, AKLGMTPLLAAVYVGALQNIF, and LANSTPYLGVILLGIVTAWLA. The tract at residues 586–618 is disordered; that stretch reads RASSVKIPVVSQEDAPSGETTSQLSEKSTPTGI. Residues 603 to 618 show a composition bias toward polar residues; the sequence is GETTSQLSEKSTPTGI.

It belongs to the ADP/ATP translocase tlc (TC 2.A.12.2) family.

The protein localises to the plastid. It is found in the chloroplast membrane. The polypeptide is ADP,ATP carrier protein 2, chloroplastic (AATP2) (Arabidopsis thaliana (Mouse-ear cress)).